We begin with the raw amino-acid sequence, 249 residues long: ATP synthase subunit a (249 aa).

The next 6 membrane-spanning stretches (helical) occupy residues 26–46 (FTNV…FLYL), 84–104 (FFPF…IGLF), 114–134 (IIVT…YGFF), 143–163 (LFVP…IEII), 185–205 (ITLK…ALGI), and 208–228 (TVLP…VAFL).

It belongs to the ATPase A chain family. In terms of assembly, F-type ATPases have 2 components, CF(1) - the catalytic core - and CF(0) - the membrane proton channel. CF(1) has five subunits: alpha(3), beta(3), gamma(1), delta(1), epsilon(1). CF(0) has three main subunits: a(1), b(2) and c(9-12). The alpha and beta chains form an alternating ring which encloses part of the gamma chain. CF(1) is attached to CF(0) by a central stalk formed by the gamma and epsilon chains, while a peripheral stalk is formed by the delta and b chains.

It localises to the cell inner membrane. Functionally, key component of the proton channel; it plays a direct role in the translocation of protons across the membrane. In Brucella ovis (strain ATCC 25840 / 63/290 / NCTC 10512), this protein is ATP synthase subunit a.